Consider the following 155-residue polypeptide: Ribosomal RNA large subunit methyltransferase H (155 aa).

S-adenosyl-L-methionine contacts are provided by residues Leu-72, Gly-103, and 122-127; that span reads LSALTL.

Belongs to the RNA methyltransferase RlmH family. Homodimer.

It is found in the cytoplasm. It carries out the reaction pseudouridine(1915) in 23S rRNA + S-adenosyl-L-methionine = N(3)-methylpseudouridine(1915) in 23S rRNA + S-adenosyl-L-homocysteine + H(+). In terms of biological role, specifically methylates the pseudouridine at position 1915 (m3Psi1915) in 23S rRNA. This Cronobacter sakazakii (strain ATCC BAA-894) (Enterobacter sakazakii) protein is Ribosomal RNA large subunit methyltransferase H.